We begin with the raw amino-acid sequence, 209 residues long: Large ribosomal subunit protein uL3 (209 aa).

The tract at residues 119–145 (AIKRHGQSRGPMSHGSHFHRAPGSVGM) is disordered.

Belongs to the universal ribosomal protein uL3 family. Part of the 50S ribosomal subunit. Forms a cluster with proteins L14 and L19.

Its function is as follows. One of the primary rRNA binding proteins, it binds directly near the 3'-end of the 23S rRNA, where it nucleates assembly of the 50S subunit. The sequence is that of Large ribosomal subunit protein uL3 from Staphylococcus aureus (strain COL).